The sequence spans 184 residues: Peptidyl-tRNA hydrolase (184 aa).

Residue Y13 participates in tRNA binding. The active-site Proton acceptor is H18. The tRNA site is built by F59, N61, and N105.

It belongs to the PTH family. Monomer.

The protein localises to the cytoplasm. It carries out the reaction an N-acyl-L-alpha-aminoacyl-tRNA + H2O = an N-acyl-L-amino acid + a tRNA + H(+). In terms of biological role, hydrolyzes ribosome-free peptidyl-tRNAs (with 1 or more amino acids incorporated), which drop off the ribosome during protein synthesis, or as a result of ribosome stalling. Functionally, catalyzes the release of premature peptidyl moieties from peptidyl-tRNA molecules trapped in stalled 50S ribosomal subunits, and thus maintains levels of free tRNAs and 50S ribosomes. The protein is Peptidyl-tRNA hydrolase of Sulfurimonas denitrificans (strain ATCC 33889 / DSM 1251) (Thiomicrospira denitrificans (strain ATCC 33889 / DSM 1251)).